The sequence spans 629 residues: MSTKPKNAAHLSESAQVDSGSVQPFTRSQKIYVQGSRPDIRVPMREVTLDVTPTDFGGEINAPVTVYDTSGPYTDPNVIIDVRKGLADVRSPWIDSRNDTERLPGLSSHFGQQRLSDAELTALRFAHVRNPRRAKAGANVSQMHYARQGIITAEMEYVAIRENMKLQEARAAGLLTQQHAGHSFGASIPKEITAEFVREEIARGRAIIPANINHVELEPMIIGRNFLVKINGNIGNSALGSSIEEEVAKLTWGIRWGSDTVMDLSTGKHIHETREWIIRNSPVPIGTVPIYQALEKVGGAAEDLTWELFRDTLIEQAEQGVDYFTIHAGVLLRYVPLTAKRVTGIVSRGGSIMAKWCLAHHQENFLYTHFEDICEIMKAYDVSFSLGDGLRPGSIADANDAAQFGELETLGELTKIAWKHDLQTMIEGPGHVPMQLIKENMDKQLECCDEAPFYTLGPLTTDIAPGYDHITSGIGAAMIGWFGCAMLCYVTPKEHLGLPNKDDVKTGIITYKIAAHAADLAKGHPGAQIRDNALSKARFEFRWEDQFNLGLDPDTARSYHDETLPKDSAKVAHFCSMCGPKFCSMKITQEVREYAANQRIEAVDVDVARGLAEQAERFKQEGSQLYKKV.

The interval 1–24 (MSTKPKNAAHLSESAQVDSGSVQP) is disordered. Over residues 13 to 24 (ESAQVDSGSVQP) the composition is skewed to polar residues. Residues N233, M262, Y291, H327, 347–349 (SRG), 388–391 (DGLR), and E427 each bind substrate. Residue H431 coordinates Zn(2+). Substrate is bound at residue Y454. H495 contacts Zn(2+). Positions 575, 578, and 583 each coordinate [4Fe-4S] cluster.

It belongs to the ThiC family. Homodimer. [4Fe-4S] cluster is required as a cofactor.

The enzyme catalyses 5-amino-1-(5-phospho-beta-D-ribosyl)imidazole + S-adenosyl-L-methionine = 4-amino-2-methyl-5-(phosphooxymethyl)pyrimidine + CO + 5'-deoxyadenosine + formate + L-methionine + 3 H(+). It participates in cofactor biosynthesis; thiamine diphosphate biosynthesis. Functionally, catalyzes the synthesis of the hydroxymethylpyrimidine phosphate (HMP-P) moiety of thiamine from aminoimidazole ribotide (AIR) in a radical S-adenosyl-L-methionine (SAM)-dependent reaction. The polypeptide is Phosphomethylpyrimidine synthase (Pseudomonas syringae pv. tomato (strain ATCC BAA-871 / DC3000)).